Here is a 278-residue protein sequence, read N- to C-terminus: Protein Rv2133c (278 aa).

The protein is Protein Rv2133c of Mycobacterium tuberculosis (strain ATCC 25618 / H37Rv).